The primary structure comprises 368 residues: Glutaminyl-peptide cyclotransferase (368 aa).

The N-terminal stretch at 1-33 (MARERRDSKAATFFCLAWALCLALPGFPQHVSG) is a signal peptide. The N-linked (GlcNAc...) asparagine glycan is linked to Asn-53. A disulfide bond links Cys-143 and Cys-169. Asp-164 contacts Zn(2+). The active-site Proton acceptor is Glu-207. Zn(2+) is bound at residue Glu-208. Asp-254 serves as the catalytic Proton acceptor. The N-linked (GlcNAc...) asparagine glycan is linked to Asn-292. Residue His-336 coordinates Zn(2+). N-linked (GlcNAc...) asparagine glycosylation occurs at Asn-352.

It belongs to the glutaminyl-peptide cyclotransferase family. As to expression, expressed by the venom gland.

It is found in the secreted. It catalyses the reaction N-terminal L-glutaminyl-[peptide] = N-terminal 5-oxo-L-prolyl-[peptide] + NH4(+). Its function is as follows. Responsible for the biosynthesis of pyroglutamyl peptides. Has a bias against acidic and tryptophan residues adjacent to the N-terminal glutaminyl residue and a lack of importance of chain length after the second residue. Also catalyzes N-terminal pyroglutamate formation. The protein is Glutaminyl-peptide cyclotransferase (QPCT) of Gloydius blomhoffii (Mamushi).